The primary structure comprises 558 residues: Formate--tetrahydrofolate ligase (558 aa).

An ATP-binding site is contributed by 66 to 73; that stretch reads TPAGEGKT.

It belongs to the formate--tetrahydrofolate ligase family.

The catalysed reaction is (6S)-5,6,7,8-tetrahydrofolate + formate + ATP = (6R)-10-formyltetrahydrofolate + ADP + phosphate. It functions in the pathway one-carbon metabolism; tetrahydrofolate interconversion. This chain is Formate--tetrahydrofolate ligase, found in Clostridium kluyveri (strain NBRC 12016).